The chain runs to 897 residues: DNA endonuclease RBBP8 (897 aa).

An essential for binding to the MRN complex and for RPA focus formation on DNA damage region spans residues 22–45 (DLWTKLKECHDREVQGLQVKVTKL). A coiled-coil region spans residues 35 to 84 (VQGLQVKVTKLKQERILDAQRLEEFFTKNQQLREQQKVLHETIKVLEDRL). The segment at 45 to 160 (LKQERILDAQ…AELECEEDVI (116 aa)) is required for interaction with LMO4, probably by stabilizing the interaction through RPPB8 dimerization. Residues Lys62 and Lys115 each participate in a glycyl lysine isopeptide (Lys-Gly) (interchain with G-Cter in SUMO2) cross-link. A coiled-coil region spans residues 117–138 (ITELMNERNTLQEENKKLSEQL). Lys193 participates in a covalent cross-link: Glycyl lysine isopeptide (Lys-Gly) (interchain with G-Cter in SUMO2). 2 positions are modified to phosphoserine: Ser233 and Ser276. Over residues 292–307 (KQPFEESTRNTEDSLR) the composition is skewed to basic and acidic residues. The segment at 292–325 (KQPFEESTRNTEDSLRFSDSTSKTPPQEELPTRV) is disordered. At Thr315 the chain carries Phosphothreonine; by CDK2. Phosphoserine occurs at positions 326, 327, and 349. Glycyl lysine isopeptide (Lys-Gly) (interchain with G-Cter in SUMO2) cross-links involve residues Lys360 and Lys378. A Phosphoserine modification is found at Ser379. Residues Lys396, Lys404, and Lys410 each participate in a glycyl lysine isopeptide (Lys-Gly) (interchain with G-Cter in SUMO2) cross-link. The tract at residues 419 to 464 (QNRTEYGKDSNTDKHLEPLKSLGGRTSKRKKTEEESEHEVSCPQAS) is disordered. Basic and acidic residues predominate over residues 420-436 (NRTEYGKDSNTDKHLEP). Residues Lys438 and Lys449 each participate in a glycyl lysine isopeptide (Lys-Gly) (interchain with G-Cter in SUMO2) cross-link. The short motif at 490 to 494 (PLDLS) is the PXDLS motif element. Residues 509–557 (SETSKNKFRQVTLYEALKTIPKGFSSSRKASDGNCTLPKDSPGEPCSQE) form a damage-recruitment motif region. Lys526 is covalently cross-linked (Glycyl lysine isopeptide (Lys-Gly) (interchain with G-Cter in SUMO2); alternate). Glycyl lysine isopeptide (Lys-Gly) (interchain with G-Cter in SUMO2) cross-links involve residues Lys530, Lys572, and Lys578. Lys604 participates in a covalent cross-link: Glycyl lysine isopeptide (Lys-Gly) (interchain with G-Cter in SUMO2); alternate. Residues Lys613, Lys638, and Lys640 each participate in a glycyl lysine isopeptide (Lys-Gly) (interchain with G-Cter in SUMO2) cross-link. The interval 641–685 (SLQNNQDVSFENIQWSIDPGADLSQYKMDVTVIDTKDGSQSKLGG) is required for interaction with LMO4, probably by making physical contact with LMO4. Phosphoserine; by ATM is present on Ser664. Residue Lys676 forms a Glycyl lysine isopeptide (Lys-Gly) (interchain with G-Cter in SUMO2) linkage. Ser679 bears the Phosphoserine mark. A disordered region spans residues 704–723 (KKQEQKGEKSSNEERKMNDS). A Glycyl lysine isopeptide (Lys-Gly) (interchain with G-Cter in SUMO2) cross-link involves residue Lys719. Ser723 is subject to Phosphoserine. Phosphoserine; by ATM is present on Ser745. Residue Lys782 forms a Glycyl lysine isopeptide (Lys-Gly) (interchain with G-Cter in SUMO2) linkage. The KLHL15-binding signature appears at 840-842 (FRY). Residue Thr847 is modified to Phosphothreonine; by CDK1. The residue at position 859 (Thr859) is a Phosphothreonine; by ATR. Residue Lys869 forms a Glycyl lysine isopeptide (Lys-Gly) (interchain with G-Cter in SUMO2) linkage. The segment at 873 to 897 (DPCPRPKRRQPYNAIFSPKGKEQKT) is disordered.

The protein belongs to the COM1/SAE2/CtIP family. As to quaternary structure, homotetramer; formed by antiparallel association of helical extensions protruding from the N-termini of two parallel coiled-coil dimers. Forms a dumbbell-shaped particle in which polar globular domains are held about 30 nm apart by a central rod. Homotetramerization is required for DNA-end resection and repair. Interacts (via the PXDLS motif) with CTBP1; the interaction is disrupted via binding of the adenovirus E1A to CTBP1. Component of the BRCA1-RBBP8 complex. Interacts (the Ser-327 phosphorylated form) with BRCA1 (via the C-terminal BRCT domains): the interaction occurs in the G2 phase, ubiquitinates RBBP8 and involves RBBP8 in BRCA1-dependent G2/M checkpoint control on DNA damage. Interacts with RB1. Interacts with the MRN complex; interacts directly with MRE11; the interaction is required for efficient homologous recombination (HR) and regulation of the MRN complex. Interacts directly with RAD50. Interacts (when phosphorylated by CDK1) with NBN; promoting association with the MRN complex. Interacts with LM04 (via the LIM zinc-binding 1 domain). Interacts with SIAH1. Interacts with RNF138. Interacts with EXD2. Interacts with CUL3 and KLHL15; this interaction leads to RBBP8 proteasomal degradation. Directly interacts with PIN1; this interaction depends upon RBBP8 phosphorylation, predominantly at Thr-315. Interacts with FZR1; this interaction leads to APC/C-mediated RBBP8 proteasomal degradation. Interacts with AUNIP; leading to recruitment of RBBP8 to sites of DNA damage. Interacts with SAMHD1. Interacts with HDGFL2. In terms of processing, hyperphosphorylation upon ionizing radiation results in dissociation from BRCA1. Phosphorylation at Thr-847 by CDK1 is essential for the recruitment to DNA and the DNA repair function. Phosphorylation at Thr-847 and Thr-859 promote interaction with NBN and recruitment to double-strand breaks (DSBs). Phosphorylated on Ser-327 as cells enter G2 phase. This phosphorylation is required for binding BRCA1 and for the G2/M DNA damage transition checkpoint control. Phosphorylation at Thr-315, probably catalyzed by CDK2, is required for PIN1-binding, while phosphorylation at Ser-276 serves as a PIN1 isomerization site. Phosphorylation at Thr-315 is cell-cycle dependent. It steadily increases during S phase, peaks at late S/G2 phase, and drops at G1. Phosphorylation is not required for tetramerization. Binds to DNA more strongly when dephosphorylated. Post-translationally, ubiquitinated. Ubiquitination at multiple sites by BRCA1 (via its N-terminal RING domain) does not lead to its proteasomal degradation but instead the ubiquitinated RBBP8 binds to chromatin following DNA damage and may play a role in G2/M checkpoint control. Ubiquitinated by RNF138 at its N-terminus. Ubiquitinated through 'Lys-48' by the E3 CUL3-KLHL15 complex; this modification leads to proteasomal degradation. Ubiquitinated by the E3 FZR1/APC/C complex; this modification leads to proteasomal degradation. In terms of tissue distribution, expressed in ER-positive breast cancer lines, but tends to be down-regulated ER-negative cells (at protein level).

It localises to the nucleus. The protein localises to the chromosome. Functionally, endonuclease that cooperates with the MRE11-RAD50-NBN (MRN) complex in DNA-end resection, the first step of double-strand break (DSB) repair through the homologous recombination (HR) pathway. HR is restricted to S and G2 phases of the cell cycle and preferentially repairs DSBs resulting from replication fork collapse. Key determinant of DSB repair pathway choice, as it commits cells to HR by preventing classical non-homologous end-joining (NHEJ). Specifically promotes the endonuclease activity of the MRN complex to clear DNA ends containing protein adducts: recruited to DSBs by NBN following phosphorylation by CDK1, and promotes the endonuclease activity of MRE11 to clear protein-DNA adducts and generate clean double-strand break ends. Functions downstream of the MRN complex and ATM, promotes ATR activation and its recruitment to DSBs in the S/G2 phase facilitating the generation of ssDNA. Component of the BRCA1-RBBP8 complex that regulates CHEK1 activation and controls cell cycle G2/M checkpoints on DNA damage. During immunoglobulin heavy chain class-switch recombination, promotes microhomology-mediated alternative end joining (A-NHEJ) and plays an essential role in chromosomal translocations. Binds preferentially to DNA Y-junctions and to DNA substrates with blocked ends and promotes intermolecular DNA bridging. In Homo sapiens (Human), this protein is DNA endonuclease RBBP8 (RBBP8).